The primary structure comprises 292 residues: uncharacterized protein (292 aa).

Disordered stretches follow at residues 29 to 50 (SEKP…LRDS) and 166 to 292 (VKRK…EELK). A Phosphoserine modification is found at serine 50. 2 stretches are compositionally biased toward polar residues: residues 176 to 189 (NSKN…PVNN) and 208 to 217 (GSPTNFSKLI). Over residues 221-239 (YKDEWLQQQKADSDRRTPK) the composition is skewed to basic and acidic residues. Polar residues-rich tracts occupy residues 240–250 (TSEASVSTQST) and 260–270 (DTETPQNSETP).

In terms of processing, phosphorylated upon DNA damage.

This is an uncharacterized protein from Rattus norvegicus (Rat).